The following is a 283-amino-acid chain: Digeranylgeranylglyceryl phosphate synthase (283 aa).

8 helical membrane-spanning segments follow: residues 21–41 (ITASIGGIIGYLISSNFEIDI), 45–65 (LLVFFVVFFVCAYGNVINDIF), 97–117 (LILGLVLSLFINIYALIIAVI), 135–155 (IGNFIIGYLTGSVFLFGGVAG), 158–178 (VMPVVILFLCSLLSIWGREIV), 204–224 (LYFATFLVVLAVILSPLPYIL), 226–246 (IFGIWYLILIAICDILFIYAM), and 261–281 (VSKFLKIIMNIVLLAFIVGAI).

The protein belongs to the UbiA prenyltransferase family. DGGGP synthase subfamily. The cofactor is Mg(2+).

Its subcellular location is the cell membrane. It catalyses the reaction sn-3-O-(geranylgeranyl)glycerol 1-phosphate + (2E,6E,10E)-geranylgeranyl diphosphate = 2,3-bis-O-(geranylgeranyl)-sn-glycerol 1-phosphate + diphosphate. It participates in membrane lipid metabolism; glycerophospholipid metabolism. In terms of biological role, prenyltransferase that catalyzes the transfer of the geranylgeranyl moiety of geranylgeranyl diphosphate (GGPP) to the C2 hydroxyl of (S)-3-O-geranylgeranylglyceryl phosphate (GGGP). This reaction is the second ether-bond-formation step in the biosynthesis of archaeal membrane lipids. The protein is Digeranylgeranylglyceryl phosphate synthase of Methanocaldococcus jannaschii (strain ATCC 43067 / DSM 2661 / JAL-1 / JCM 10045 / NBRC 100440) (Methanococcus jannaschii).